The sequence spans 363 residues: MGAATETFYSVIRRQGITRRSFHKFCSLTATSLGLGPLAASRIANALETKPRVPVIWMHGLECTCCSESFIRSAHPLVKDAVLSMISLDYDDTIMAAAGHQAEAILEETRAKHKGQYILAVEGNPPLNEGGMFCIDGGKPFVEKLKMMAEDAMAIIAWGACASWGCVQAAKPNPTQATPIDKVITNKPIIKVPGCPPIAEVMTGVVTFITTFGKLPELDRQGRPKMFYSQRIHDKCYRRPHFDAGQFVEEWDDEAARKGYCLYKMGCKGPTTYNACSTVRWNGGVSFPIQSGHGCIGCSEDGFWDKGSFYDRLTNIKQFGIEKNADQIGMVAAGAVGAAVAAHAAVTAVKRLATKREDADHNS.

Positions 1–46 (MGAATETFYSVIRRQGITRRSFHKFCSLTATSLGLGPLAASRIANA) form a signal peptide, tat-type signal. 8 residues coordinate [4Fe-4S] cluster: C63, C66, C161, C195, H233, C236, C261, and C267. 3 residues coordinate [3Fe-4S] cluster: C276, C295, and C298.

Belongs to the [NiFe]/[NiFeSe] hydrogenase small subunit family. Heterodimer of a large and a small subunit. Requires [4Fe-4S] cluster as cofactor. [3Fe-4S] cluster serves as cofactor. Post-translationally, predicted to be exported by the Tat system. The position of the signal peptide cleavage has not been experimentally proven.

Its subcellular location is the cell membrane. It catalyses the reaction H2 + A = AH2. Functionally, this enzyme recycles the H(2) produced by nitrogenase to increase the production of ATP and to protect nitrogenase against inhibition or damage by O(2) under carbon- or phosphate-limited conditions. In Bradyrhizobium diazoefficiens (strain JCM 10833 / BCRC 13528 / IAM 13628 / NBRC 14792 / USDA 110), this protein is Uptake hydrogenase small subunit (hupA).